The primary structure comprises 88 residues: Putative membrane protein insertion efficiency factor (88 aa).

The tract at residues 66-88 (DFVPPKKEKNADSEHSCKAHHHH) is disordered. A compositionally biased stretch (basic and acidic residues) spans 69–82 (PPKKEKNADSEHSC).

The protein belongs to the UPF0161 family.

Its subcellular location is the cell membrane. In terms of biological role, could be involved in insertion of integral membrane proteins into the membrane. The protein is Putative membrane protein insertion efficiency factor of Listeria monocytogenes serotype 4b (strain CLIP80459).